The chain runs to 983 residues: Ephrin type-A receptor 3 (983 aa).

The N-terminal stretch at 1-19 (MDRRRLPLLLLCAALGSAG) is a signal peptide. At 20-540 (RLSARPGNEV…SFSISSENSQ (521 aa)) the chain is on the extracellular side. Residues 28–206 (EVNLLDSKTI…YFKKCPFTVK (179 aa)) enclose the Eph LBD domain. N-linked (GlcNAc...) asparagine glycosylation is found at N231, N336, N390, N403, and N492. 2 consecutive Fibronectin type-III domains span residues 324 to 434 (PPSA…TNQA) and 435 to 530 (APSP…TSPD). A helical transmembrane segment spans residues 541-564 (VVMIAISAAVAIILLTVVVYVLIG). Topologically, residues 565 to 983 (RFCGYKKSKH…THTKNSPVPV (419 aa)) are cytoplasmic. Phosphotyrosine; by autocatalysis is present on residues Y596 and Y602. Positions 621–882 (ISIDKVVGAG…QIVSILDKLI (262 aa)) constitute a Protein kinase domain. ATP is bound by residues 628 to 633 (GAGEFG), K653, and 700 to 706 (EYMENGS). Y701 carries the phosphotyrosine; by autocatalysis modification. The Proton acceptor role is filled by D746. Residue 750–751 (RN) coordinates ATP. A Phosphotyrosine; by autocatalysis modification is found at Y779. The region spanning 911–975 (SAFRTAGDWL…VSSIKTLETH (65 aa)) is the SAM domain. The PDZ-binding motif lies at 981–983 (VPV).

This sequence belongs to the protein kinase superfamily. Tyr protein kinase family. Ephrin receptor subfamily. Heterotetramer upon binding of the ligand. The heterotetramer is composed of an ephrin dimer and a receptor dimer. Oligomerization is probably required to induce biological responses. Post-translationally, autophosphorylates upon activation by EFNA5. Highly expressed in the developing brain and embryonic tissues. In adult, the greatest levels of expression occur in the brain. It is expressed in a graded manner across the retina with the highest expression at its temporal pole. Detectable in all other adult tissues examined, except the liver.

Its subcellular location is the cell membrane. The catalysed reaction is L-tyrosyl-[protein] + ATP = O-phospho-L-tyrosyl-[protein] + ADP + H(+). Its function is as follows. Receptor tyrosine kinase which binds promiscuously membrane-bound ephrin family ligands residing on adjacent cells, leading to contact-dependent bidirectional signaling into neighboring cells. The signaling pathway downstream of the receptor is referred to as forward signaling while the signaling pathway downstream of the ephrin ligand is referred to as reverse signaling. Highly promiscuous for ephrin-A ligands it binds preferentially EFNA5. Upon activation by EFNA5 regulates cell-cell adhesion, cytoskeletal organization and cell migration. Plays a role in cardiac cells migration and differentiation probably through activation by EFNA1. Involved in the retinotectal mapping of neurons. May also control the segregation but not the guidance of motor and sensory axons during neuromuscular circuit development. The protein is Ephrin type-A receptor 3 (EPHA3) of Gallus gallus (Chicken).